Reading from the N-terminus, the 312-residue chain is tRNA uridine(34) hydroxylase (312 aa).

Residues 147–237 (SDRNVIFIDM…GILGYVHDAN (91 aa)) enclose the Rhodanese domain. Cys-201 (cysteine persulfide intermediate) is an active-site residue.

The protein belongs to the TrhO family.

It carries out the reaction uridine(34) in tRNA + AH2 + O2 = 5-hydroxyuridine(34) in tRNA + A + H2O. Its function is as follows. Catalyzes oxygen-dependent 5-hydroxyuridine (ho5U) modification at position 34 in tRNAs. This chain is tRNA uridine(34) hydroxylase, found in Buchnera aphidicola subsp. Schizaphis graminum (strain Sg).